Reading from the N-terminus, the 324-residue chain is Cyclin-dependent kinase C-3 (324 aa).

The region spanning 27 to 320 (FRRIRKIGEG…AHDALCAAYF (294 aa)) is the Protein kinase domain. ATP contacts are provided by residues 33 to 41 (IGEGTYGEV) and K56. Residue T37 is modified to Phosphothreonine. Position 38 is a phosphotyrosine (Y38). D160 acts as the Proton acceptor in catalysis. At T193 the chain carries Phosphothreonine.

The protein belongs to the protein kinase superfamily. CMGC Ser/Thr protein kinase family. CDC2/CDKX subfamily.

The catalysed reaction is L-seryl-[protein] + ATP = O-phospho-L-seryl-[protein] + ADP + H(+). The enzyme catalyses L-threonyl-[protein] + ATP = O-phospho-L-threonyl-[protein] + ADP + H(+). It carries out the reaction [DNA-directed RNA polymerase] + ATP = phospho-[DNA-directed RNA polymerase] + ADP + H(+). In Oryza sativa subsp. japonica (Rice), this protein is Cyclin-dependent kinase C-3 (CDKC-1).